The following is a 144-amino-acid chain: MKIATKYHGDIEIHEKDIVRFEQGIPGFLEEKQFVLLPLEDTPFIILQSVNTPALGFVLIEPFSYFPTYEIDLDDNTLEQLQITGEQDVALYVILTVADPFDDTTANLQAPIVINVHKRLGKQVILTNTNYKTKHRLFPEKVAK.

Belongs to the FliW family. As to quaternary structure, monomer. One copy interacts with the each alpha-helical wing of the CsrA homodimer, yielding a FliW-CsrA(2)-FliW complex. Comparison with a CsrA-mRNA structure (2JPP) suggests CsrA cannot bind both mRNA and FliW at the same time. Interacts with flagellin.

The protein resides in the cytoplasm. Functionally, acts as an anti-CsrA protein, binds CsrA and prevents it from repressing translation of its target genes, one of which is flagellin. Binds to flagellin and participates in the assembly of the flagellum. In terms of biological role, allosterically inhibits CsrA binding to mRNA in a non-competitive fashion by preventing CsrA binding to the 5'-UTR. The sequence is that of Flagellar assembly factor FliW from Geobacillus thermodenitrificans (strain NG80-2).